Reading from the N-terminus, the 376-residue chain is Actin-related protein T1 (376 aa).

Belongs to the actin family.

The protein localises to the cytoplasm. It is found in the cytoskeleton. It localises to the nucleus. The protein resides in the cytoplasmic vesicle. Its subcellular location is the secretory vesicle. The protein localises to the acrosome. Negatively regulates the Hedgehog (SHH) signaling. Binds to the promoter of the SHH signaling mediator, GLI1, and inhibits its expression. This is Actin-related protein T1 (Actrt1) from Mus musculus (Mouse).